A 182-amino-acid polypeptide reads, in one-letter code: ATP-dependent protease subunit HslV (182 aa).

Thr12 is a catalytic residue. Residues Ala167, Cys170, and Thr173 each coordinate Na(+).

It belongs to the peptidase T1B family. HslV subfamily. A double ring-shaped homohexamer of HslV is capped on each side by a ring-shaped HslU homohexamer. The assembly of the HslU/HslV complex is dependent on binding of ATP.

The protein localises to the cytoplasm. It catalyses the reaction ATP-dependent cleavage of peptide bonds with broad specificity.. Its activity is regulated as follows. Allosterically activated by HslU binding. In terms of biological role, protease subunit of a proteasome-like degradation complex believed to be a general protein degrading machinery. The sequence is that of ATP-dependent protease subunit HslV from Chlorobium limicola (strain DSM 245 / NBRC 103803 / 6330).